Reading from the N-terminus, the 650-residue chain is Chaperone protein DnaK (650 aa).

Threonine 200 is modified (phosphothreonine; by autocatalysis). Residues 611 to 636 (AQQAGAAGAAGAAEGAAHAGGAQQAA) are compositionally biased toward low complexity. A disordered region spans residues 611–637 (AQQAGAAGAAGAAEGAAHAGGAQQAAD).

It belongs to the heat shock protein 70 family.

Acts as a chaperone. This Burkholderia ambifaria (strain MC40-6) protein is Chaperone protein DnaK.